Consider the following 358-residue polypeptide: Peroxisome biogenesis protein 3-1 (358 aa).

A helical membrane pass occupies residues 15–32 (ILVTTTCLGSGYLLYKLY). Residues 33–62 (NAHTRKLADLERELANERENDEIIKTQMKA) adopt a coiled-coil conformation.

This sequence belongs to the peroxin-3 family.

It is found in the peroxisome membrane. Involved in morphology determination of peroxisomes, but not in import of peroxisomal matrix proteins. May act as a docking factor for PEX19 and be necessary for the import of peroxisomal membrane proteins in the peroxisomes. The protein is Peroxisome biogenesis protein 3-1 (PEX3-1) of Arabidopsis thaliana (Mouse-ear cress).